Reading from the N-terminus, the 311-residue chain is tRNA-cytidine(32) 2-sulfurtransferase (311 aa).

A PP-loop motif motif is present at residues 47-52; it reads SGGKDS. Positions 122, 125, and 213 each coordinate [4Fe-4S] cluster.

The protein belongs to the TtcA family. Homodimer. It depends on Mg(2+) as a cofactor. [4Fe-4S] cluster serves as cofactor.

The protein localises to the cytoplasm. It carries out the reaction cytidine(32) in tRNA + S-sulfanyl-L-cysteinyl-[cysteine desulfurase] + AH2 + ATP = 2-thiocytidine(32) in tRNA + L-cysteinyl-[cysteine desulfurase] + A + AMP + diphosphate + H(+). It functions in the pathway tRNA modification. Functionally, catalyzes the ATP-dependent 2-thiolation of cytidine in position 32 of tRNA, to form 2-thiocytidine (s(2)C32). The sulfur atoms are provided by the cysteine/cysteine desulfurase (IscS) system. The protein is tRNA-cytidine(32) 2-sulfurtransferase of Shigella flexneri serotype 5b (strain 8401).